Reading from the N-terminus, the 263-residue chain is 3-methyl-2-oxobutanoate hydroxymethyltransferase (263 aa).

Mg(2+) is bound by residues Asp45 and Asp84. 3-methyl-2-oxobutanoate contacts are provided by residues 45-46 (DS), Asp84, and Lys112. Glu114 contributes to the Mg(2+) binding site. Glu180 functions as the Proton acceptor in the catalytic mechanism.

Belongs to the PanB family. In terms of assembly, homodecamer; pentamer of dimers. Mg(2+) is required as a cofactor.

The protein resides in the cytoplasm. It carries out the reaction 3-methyl-2-oxobutanoate + (6R)-5,10-methylene-5,6,7,8-tetrahydrofolate + H2O = 2-dehydropantoate + (6S)-5,6,7,8-tetrahydrofolate. It participates in cofactor biosynthesis; (R)-pantothenate biosynthesis; (R)-pantoate from 3-methyl-2-oxobutanoate: step 1/2. Functionally, catalyzes the reversible reaction in which hydroxymethyl group from 5,10-methylenetetrahydrofolate is transferred onto alpha-ketoisovalerate to form ketopantoate. This Enterobacter sp. (strain 638) protein is 3-methyl-2-oxobutanoate hydroxymethyltransferase.